A 631-amino-acid chain; its full sequence is Quinoprotein alcohol dehydrogenase PedE (631 aa).

A signal peptide spans 1-33 (MTIRSLPALSPLALSVRVLLMAGSLALGNVATA). Ca(2+)-binding residues include D53, T56, and D59. Position 103 (E103) interacts with pyrroloquinoline quinone. Residues C147 and C148 are joined by a disulfide bond. Residues R153, T197, and 215-217 (HGS) each bind pyrroloquinoline quinone. A Ca(2+)-binding site is contributed by E221. The disordered stretch occupies residues 250–286 (GRLNGKDSTPTGDVKAPSWPDDPTTETGKVEAWSHGG). Positions 308 and 358 each coordinate Ca(2+). The Proton acceptor role is filled by D358. R386 lines the pyrroloquinoline quinone pocket. Positions 421–443 (GRPVENPGQRPAKPLPGETKGKP) are disordered. Pyrroloquinoline quinone is bound by residues W531 and A595.

The protein belongs to the bacterial PQQ dehydrogenase family. As to quaternary structure, homodimer. Interacts with cytochrome c550. The cofactor is pyrroloquinoline quinone. Ca(2+) is required as a cofactor. Post-translationally, the disulfide ring formed between the two adjacent cysteine residues Cys-147 and Cys-148 is essential for efficient electron transfer at pH 7 from PedE to its natural electron acceptor cytochrome c550.

It is found in the periplasm. The enzyme catalyses a primary alcohol + 2 Fe(III)-[cytochrome c] = an aldehyde + 2 Fe(II)-[cytochrome c] + 2 H(+). It carries out the reaction ethanol + 2 Fe(III)-[cytochrome c] = acetaldehyde + 2 Fe(II)-[cytochrome c] + 2 H(+). It catalyses the reaction butan-1-ol + 2 Fe(III)-[cytochrome c] = butanal + 2 Fe(II)-[cytochrome c] + 2 H(+). The catalysed reaction is butan-2-ol + 2 Fe(III)-[cytochrome c] = butan-2-one + 2 Fe(II)-[cytochrome c] + 2 H(+). The enzyme catalyses 2-phenylethanol + 2 Fe(III)-[cytochrome c] = 2-phenylacetaldehyde + 2 Fe(II)-[cytochrome c] + 2 H(+). It carries out the reaction octan-1-ol + 2 Fe(III)-[cytochrome c] = octanal + 2 Fe(II)-[cytochrome c] + 2 H(+). It catalyses the reaction hexan-1-ol + 2 Fe(III)-[cytochrome c] = hexanal + 2 Fe(II)-[cytochrome c] + 2 H(+). The catalysed reaction is cinnamyl alcohol + 2 Fe(III)-[cytochrome c] = cinnamaldehyde + 2 Fe(II)-[cytochrome c] + 2 H(+). The enzyme catalyses farnesol + 2 Fe(III)-[cytochrome c] = farnesal + 2 Fe(II)-[cytochrome c] + 2 H(+). It carries out the reaction an aldehyde + 2 Fe(III)-[cytochrome c] + H2O = a carboxylate + 2 Fe(II)-[cytochrome c] + 3 H(+). It catalyses the reaction acetaldehyde + 2 Fe(III)-[cytochrome c] + H2O = 2 Fe(II)-[cytochrome c] + acetate + 3 H(+). The catalysed reaction is butanal + 2 Fe(III)-[cytochrome c] + H2O = butanoate + 2 Fe(II)-[cytochrome c] + 3 H(+). The enzyme catalyses hexanal + 2 Fe(III)-[cytochrome c] + H2O = hexanoate + 2 Fe(II)-[cytochrome c] + 3 H(+). It carries out the reaction octanal + 2 Fe(III)-[cytochrome c] + H2O = octanoate + 2 Fe(II)-[cytochrome c] + 3 H(+). Alcohol dehydrogenase that catalyzes the oxidation of a range of substrates, including linear and aromatic primary and secondary alcohols, as well as aldehydes, allowing bacterial growth with a variety of volatile organic compounds (VOCs) as carbon and energy sources. Uses a specific inducible cytochrome c550, encoded by the adjacent gene in the locus, as electron acceptor. The sequence is that of Quinoprotein alcohol dehydrogenase PedE from Pseudomonas putida (strain ATCC 47054 / DSM 6125 / CFBP 8728 / NCIMB 11950 / KT2440).